A 475-amino-acid chain; its full sequence is 3-keto-steroid reductase ERG27 (475 aa).

Residues I32, I55, T59, and K65 each contribute to the NADP(+) site. Active-site proton donor residues include S249 and Y272. NADP(+) contacts are provided by Y272, K276, V324, and S326. The Lowers pKa of active site Tyr role is filled by K276.

It belongs to the short-chain dehydrogenases/reductases (SDR) family. ERG27 subfamily. In terms of assembly, heterotetramer of ERG25, ERG26, ERG27 and ERG28. ERG28 acts as a scaffold to tether ERG27 and other 4,4-demethylation-related enzymes, forming a demethylation enzyme complex, in the endoplasmic reticulum.

The protein resides in the endoplasmic reticulum membrane. It localises to the lipid droplet. It functions in the pathway steroid metabolism; ergosterol biosynthesis. In terms of biological role, 3-keto-steroid reductase; part of the third module of ergosterol biosynthesis pathway that includes the late steps of the pathway. ERG27 is a catalytic component of the C-4 demethylation complex that catalyzes the conversion of 4,4-dimethylfecosterol into fecosterol via 4-methylfecosterol. The third module or late pathway involves the ergosterol synthesis itself through consecutive reactions that mainly occur in the endoplasmic reticulum (ER) membrane. Firstly, the squalene synthase ERG9 catalyzes the condensation of 2 farnesyl pyrophosphate moieties to form squalene, which is the precursor of all steroids. Squalene synthase is crucial for balancing the incorporation of farnesyl diphosphate (FPP) into sterol and nonsterol isoprene synthesis. Secondly, squalene is converted into lanosterol by the consecutive action of the squalene epoxidase ERG1 and the lanosterol synthase ERG7. Then, the delta(24)-sterol C-methyltransferase ERG6 methylates lanosterol at C-24 to produce eburicol. Eburicol is the substrate of the sterol 14-alpha demethylase encoded by CYP51A, CYP51B and CYP51C, to yield 4,4,24-trimethyl ergosta-8,14,24(28)-trienol. CYP51B encodes the enzyme primarily responsible for sterol 14-alpha-demethylation, and plays an essential role in ascospore formation. CYP51A encodes an additional sterol 14-alpha-demethylase, induced on ergosterol depletion and responsible for the intrinsic variation in azole sensitivity. The third CYP51 isoform, CYP51C, does not encode a sterol 14-alpha-demethylase, but is required for full virulence on host wheat ears. The C-14 reductase ERG24 then reduces the C14=C15 double bond which leads to 4,4-dimethylfecosterol. A sequence of further demethylations at C-4, involving the C-4 demethylation complex containing the C-4 methylsterol oxidases ERG25, the sterol-4-alpha-carboxylate 3-dehydrogenase ERG26 and the 3-keto-steroid reductase ERG27, leads to the production of fecosterol via 4-methylfecosterol. ERG28 has a role as a scaffold to help anchor ERG25, ERG26 and ERG27 to the endoplasmic reticulum. The C-8 sterol isomerase ERG2 then catalyzes the reaction which results in unsaturation at C-7 in the B ring of sterols and thus converts fecosterol to episterol. The sterol-C5-desaturases ERG3A and ERG3BB then catalyze the introduction of a C-5 double bond in the B ring to produce 5-dehydroepisterol. The C-22 sterol desaturases ERG5A and ERG5B further convert 5-dehydroepisterol into ergosta-5,7,22,24(28)-tetraen-3beta-ol by forming the C-22(23) double bond in the sterol side chain. Finally, ergosta-5,7,22,24(28)-tetraen-3beta-ol is substrate of the C-24(28) sterol reductase ERG4 to produce ergosterol. The polypeptide is 3-keto-steroid reductase ERG27 (Gibberella zeae (strain ATCC MYA-4620 / CBS 123657 / FGSC 9075 / NRRL 31084 / PH-1) (Wheat head blight fungus)).